The primary structure comprises 773 residues: Beta-D-xylosidase 3 (773 aa).

The N-terminal stretch at 1–23 (MASRNRALFSVSTLFLCFIVCIS) is a signal peptide. The N-linked (GlcNAc...) asparagine glycan is linked to Asn-131. The active site involves Asp-298. 3 N-linked (GlcNAc...) asparagine glycosylation sites follow: Asn-349, Asn-432, and Asn-770.

It belongs to the glycosyl hydrolase 3 family. As to expression, expressed in flowers and siliques, in the early stage of seed formation and not at seed maturation. Detected exclusively in the endosperm of very young seeds when the embryo is at the globular stage.

It localises to the secreted. Its subcellular location is the extracellular space. It is found in the extracellular matrix. It carries out the reaction Hydrolysis of terminal non-reducing alpha-L-arabinofuranoside residues in alpha-L-arabinosides.. In terms of biological role, involved in the hydrolysis of arabinan. Can hydrolyze (1,3)-alpha-, (1,2)-alpha-linked side group residues and non-reducing terminal L-arabinofuranose residues of debranched (1,5)-alpha-L-arabinan backbone. Also acts as a beta-D-xylosidase, releasing D-xylose from arabinoxylan and xylan. The protein is Beta-D-xylosidase 3 (BXL3) of Arabidopsis thaliana (Mouse-ear cress).